Consider the following 363-residue polypeptide: Pyrimidine monooxygenase RutA (363 aa).

FMN is bound by residues 49–50, Asn115, Glu124, 140–141, and Ser190; these read IK and RY.

This sequence belongs to the NtaA/SnaA/DszA monooxygenase family. RutA subfamily.

The enzyme catalyses uracil + FMNH2 + NADH + O2 = (Z)-3-ureidoacrylate + FMN + NAD(+) + H2O + H(+). The catalysed reaction is thymine + FMNH2 + NADH + O2 = (Z)-2-methylureidoacrylate + FMN + NAD(+) + H2O + H(+). Catalyzes the pyrimidine ring opening between N-3 and C-4 by an unusual flavin hydroperoxide-catalyzed mechanism, adding oxygen atoms in the process to yield ureidoacrylate peracid, that immediately reacts with FMN forming ureidoacrylate and FMN-N(5)-oxide. The FMN-N(5)-oxide reacts spontaneously with NADH to produce FMN. Requires the flavin reductase RutF to regenerate FMN in vivo. This chain is Pyrimidine monooxygenase RutA, found in Pantoea ananatis (strain LMG 20103).